The sequence spans 96 residues: Fluoride-specific ion channel FluC 1 (96 aa).

Transmembrane regions (helical) follow at residues 4 to 24 (LIQGLGVGAGAALGVCVRLAL) and 26 to 46 (LWLGDSAWPILTINVLGAFLM). Na(+) is bound by residues Gly-61 and Thr-64. The helical transmembrane segment at 69–89 (MMLNDVSFYFFTAVGCILAWL) threads the bilayer.

This sequence belongs to the fluoride channel Fluc/FEX (TC 1.A.43) family.

It localises to the cell membrane. It carries out the reaction fluoride(in) = fluoride(out). With respect to regulation, na(+) is not transported, but it plays an essential structural role and its presence is essential for fluoride channel function. Its function is as follows. Fluoride-specific ion channel. Important for reducing fluoride concentration in the cell, thus reducing its toxicity. The protein is Fluoride-specific ion channel FluC 1 of Corynebacterium glutamicum (strain ATCC 13032 / DSM 20300 / JCM 1318 / BCRC 11384 / CCUG 27702 / LMG 3730 / NBRC 12168 / NCIMB 10025 / NRRL B-2784 / 534).